The primary structure comprises 578 residues: Proline--tRNA ligase (578 aa).

The protein belongs to the class-II aminoacyl-tRNA synthetase family. ProS type 1 subfamily. In terms of assembly, homodimer.

It is found in the cytoplasm. It catalyses the reaction tRNA(Pro) + L-proline + ATP = L-prolyl-tRNA(Pro) + AMP + diphosphate. Its function is as follows. Catalyzes the attachment of proline to tRNA(Pro) in a two-step reaction: proline is first activated by ATP to form Pro-AMP and then transferred to the acceptor end of tRNA(Pro). As ProRS can inadvertently accommodate and process non-cognate amino acids such as alanine and cysteine, to avoid such errors it has two additional distinct editing activities against alanine. One activity is designated as 'pretransfer' editing and involves the tRNA(Pro)-independent hydrolysis of activated Ala-AMP. The other activity is designated 'posttransfer' editing and involves deacylation of mischarged Ala-tRNA(Pro). The misacylated Cys-tRNA(Pro) is not edited by ProRS. This Burkholderia thailandensis (strain ATCC 700388 / DSM 13276 / CCUG 48851 / CIP 106301 / E264) protein is Proline--tRNA ligase.